Reading from the N-terminus, the 198-residue chain is Imidazoleglycerol-phosphate dehydratase (198 aa).

It belongs to the imidazoleglycerol-phosphate dehydratase family.

It localises to the cytoplasm. The enzyme catalyses D-erythro-1-(imidazol-4-yl)glycerol 3-phosphate = 3-(imidazol-4-yl)-2-oxopropyl phosphate + H2O. It functions in the pathway amino-acid biosynthesis; L-histidine biosynthesis; L-histidine from 5-phospho-alpha-D-ribose 1-diphosphate: step 6/9. The protein is Imidazoleglycerol-phosphate dehydratase of Nitratidesulfovibrio vulgaris (strain DP4) (Desulfovibrio vulgaris).